The primary structure comprises 122 residues: MAGVWVFKDGIVRRVENPGSEESSSAGDGGGGGRRKVLVHVPSGEVVASYEVLERRLRELGWERYLTDPCLLQFHQRSTVHLISVPRDFSKFKLVHMYDIVVKTRNVFEVRDAAAPAVSPAT.

The segment at 16-36 (ENPGSEESSSAGDGGGGGRRK) is disordered.

Belongs to the FPF1 family.

The protein is Flowering-promoting factor 1-like protein 3 of Oryza sativa subsp. japonica (Rice).